Here is a 331-residue protein sequence, read N- to C-terminus: Glycerophosphodiester phosphodiesterase 1 (331 aa).

Over 1–3 (MWL) the chain is Cytoplasmic. A helical transmembrane segment spans residues 4–24 (WEDQGGLLGPFSFVLVLLLVV). Over 25–248 (TRSPFNACVL…PRYSVFWKQS (224 aa)) the chain is Lumenal. In terms of domain architecture, GP-PDE spans 65-331 (VSAIAHRGGS…SMLEDCAPHF (267 aa)). Residues Glu-97 and Asp-99 each contribute to the Mg(2+) site. A glycan (N-linked (GlcNAc...) asparagine) is linked at Asn-168. Asp-174 is a binding site for Mg(2+). Residues 249 to 269 (VFVVLDILLDWSMHNVLWYLC) form a helical membrane-spanning segment. Residues 270–331 (GISAFLMQKD…SMLEDCAPHF (62 aa)) are Cytoplasmic-facing.

The protein belongs to the glycerophosphoryl diester phosphodiesterase family. Interacts with PRAF2. Interacts with RGS16. The cofactor is Mg(2+). Post-translationally, N-glycosylated. As to expression, widely expressed. Highly expressed in the brain and spinal cord, followed by kidney, liver, and testis. In contrast, little or no expression is detected in the heart or spleen.

It localises to the cell membrane. The protein localises to the cytoplasmic vesicle membrane. The catalysed reaction is sn-glycero-3-phospho-1D-myo-inositol + H2O = myo-inositol + sn-glycerol 3-phosphate + H(+). It catalyses the reaction 1-O-(1Z-octadecenyl)-sn-glycero-3-phospho-(N-5Z,8Z,11Z,14Z-eicosatetraenoyl)-ethanolamine + H2O = 1-O-(1Z-octadecenyl)-sn-glycero-3-phosphate + N-(5Z,8Z,11Z,14Z-eicosatetraenoyl)-ethanolamine + H(+). It carries out the reaction 1-O-(1Z-octadecenyl)-sn-glycero-3-phospho-(N-9Z-octadecenoyl)-ethanolamine + H2O = 1-O-(1Z-octadecenyl)-sn-glycero-3-phosphate + N-(9Z-octadecenoyl) ethanolamine + H(+). The enzyme catalyses 1-O-(1Z-octadecenyl)-sn-glycero-3-phospho-N-hexadecanoyl-ethanolamine + H2O = 1-O-(1Z-octadecenyl)-sn-glycero-3-phosphate + N-hexadecanoylethanolamine + H(+). The catalysed reaction is N-(4Z,7Z,10Z,13Z,16Z,19Z)-docosahexaenoyl-sn-glycero-3-phosphoethanolamine + H2O = N-(4Z,7Z,10Z,13Z,16Z,19Z)-docosahexaenoyl ethanolamine + sn-glycerol 3-phosphate + H(+). It catalyses the reaction N-eicosanoyl-sn-glycero-3-phosphoethanolamine + H2O = N-eicosanoyl ethanolamine + sn-glycerol 3-phosphate + H(+). It carries out the reaction N-hexadecanoyl-sn-glycero-3-phosphoethanolamine + H2O = N-hexadecanoylethanolamine + sn-glycerol 3-phosphate + H(+). The enzyme catalyses N-(9Z-octadecenoyl)-sn-glycero-3-phosphoethanolamine + H2O = N-(9Z-octadecenoyl) ethanolamine + sn-glycerol 3-phosphate + H(+). The catalysed reaction is N-(5Z,8Z,11Z,14Z-eicosatetraenoyl)-sn-glycero-3-phosphoethanolamine + H2O = N-(5Z,8Z,11Z,14Z-eicosatetraenoyl)-ethanolamine + sn-glycerol 3-phosphate + H(+). With respect to regulation, inhibited by EDTA, calcium chloride, and zinc chloride. Enhanced by magnesium chloride. Glycerophosphodiester phosphodiesterase activity can be modulated by G-protein signaling pathways. Its function is as follows. Hydrolyzes the phosphodiester bond of glycerophosphodiesters such as glycerophosphoinositol (GroPIns) and glycerophosphoethanolamine (GroPEth), to yield a glycerol phosphate and an alcohol. Hydrolyzes glycerophospho-N-acylethanolamines to N-acylethanolamines in the brain and participates in bioactive N-acylethanolamine biosynthesis such as anandamide (an endocannabinoid), N-palmitoylethanolamine (an anti-inflammatory), and N-oleoylethanolamine (an anorexic). In addition, has a lysophospholipase D activity by hydrolyzing N-acyl-lysoplasmenylethanolamine (N-acyl-lysoPlsEt) to N-acylethanolamine. However lysophospholipase D activity is lower than glycerophosphodiester phosphodiesterase activity. Has little or no activity towards glycerophosphocholine. This Mus musculus (Mouse) protein is Glycerophosphodiester phosphodiesterase 1.